The following is a 336-amino-acid chain: Octanoyltransferase (336 aa).

Residues 1–16 (MPKSALMSSSFQTSVS) show a composition bias toward polar residues. Disordered regions lie at residues 1 to 22 (MPKS…PLPV) and 48 to 88 (QGKG…GGGR). The interval 1 to 92 (MPKSALMSSS…AAGGGRTIRD (92 aa)) is unknown. Residues 93–336 (VKEAAFDVLD…GQEALSVASP (244 aa)) are lipB domain. The 195-residue stretch at 124–318 (VGGRPTLLLV…AFALTFADYD (195 aa)) folds into the BPL/LPL catalytic domain. Residues 170–177 (RGGDVTYH), 244–246 (SIG), and 257–259 (GIG) each bind substrate. The active-site Acyl-thioester intermediate is the Cys275.

It in the C-terminal section; belongs to the LipB family.

It localises to the cytoplasm. It catalyses the reaction octanoyl-[ACP] + L-lysyl-[protein] = N(6)-octanoyl-L-lysyl-[protein] + holo-[ACP] + H(+). It functions in the pathway protein modification; protein lipoylation via endogenous pathway; protein N(6)-(lipoyl)lysine from octanoyl-[acyl-carrier-protein]: step 1/2. Functionally, catalyzes the transfer of endogenously produced octanoic acid from octanoyl-acyl-carrier-protein onto the lipoyl domains of lipoate-dependent enzymes. Lipoyl-ACP can also act as a substrate although octanoyl-ACP is likely to be the physiological substrate. In Deinococcus radiodurans (strain ATCC 13939 / DSM 20539 / JCM 16871 / CCUG 27074 / LMG 4051 / NBRC 15346 / NCIMB 9279 / VKM B-1422 / R1), this protein is Octanoyltransferase.